The sequence spans 37 residues: Large ribosomal subunit protein bL36 (37 aa).

The protein belongs to the bacterial ribosomal protein bL36 family.

This is Large ribosomal subunit protein bL36 from Mycobacteroides abscessus (strain ATCC 19977 / DSM 44196 / CCUG 20993 / CIP 104536 / JCM 13569 / NCTC 13031 / TMC 1543 / L948) (Mycobacterium abscessus).